A 114-amino-acid polypeptide reads, in one-letter code: uncharacterized protein (114 aa).

3 residues coordinate Fe cation: Cys-40, Cys-106, and Cys-108.

The protein belongs to the HesB/IscA family. Ycf83 subfamily.

Its subcellular location is the plastid. The protein localises to the chloroplast. This is an uncharacterized protein from Pyropia yezoensis (Susabi-nori).